A 472-amino-acid chain; its full sequence is Proline--tRNA ligase (472 aa).

Belongs to the class-II aminoacyl-tRNA synthetase family. ProS type 3 subfamily. As to quaternary structure, homodimer.

Its subcellular location is the cytoplasm. The enzyme catalyses tRNA(Pro) + L-proline + ATP = L-prolyl-tRNA(Pro) + AMP + diphosphate. In terms of biological role, catalyzes the attachment of proline to tRNA(Pro) in a two-step reaction: proline is first activated by ATP to form Pro-AMP and then transferred to the acceptor end of tRNA(Pro). The sequence is that of Proline--tRNA ligase from Ureaplasma parvum serovar 3 (strain ATCC 27815 / 27 / NCTC 11736).